The primary structure comprises 200 residues: Probable GTP-binding protein EngB (200 aa).

The region spanning Asn22–Gly199 is the EngB-type G domain. GTP is bound by residues Gly30–Ser37, Gly57–Leu61, Asp85–Gly88, Thr155–Asp158, and Phe177–Asn180. Residues Ser37 and Thr59 each contribute to the Mg(2+) site.

Belongs to the TRAFAC class TrmE-Era-EngA-EngB-Septin-like GTPase superfamily. EngB GTPase family. The cofactor is Mg(2+).

Necessary for normal cell division and for the maintenance of normal septation. In Aliarcobacter butzleri (strain RM4018) (Arcobacter butzleri), this protein is Probable GTP-binding protein EngB.